Consider the following 216-residue polypeptide: GTP cyclohydrolase 1 (216 aa).

Positions 1–33 (MPQARGEGATPPTSLPNPSLKGVPLPDNPNNLE) are disordered. Positions 24–33 (PLPDNPNNLE) are enriched in low complexity. 3 residues coordinate Zn(2+): Cys-102, His-105, and Cys-173.

The protein belongs to the GTP cyclohydrolase I family. Toroid-shaped homodecamer, composed of two pentamers of five dimers.

The enzyme catalyses GTP + H2O = 7,8-dihydroneopterin 3'-triphosphate + formate + H(+). It participates in cofactor biosynthesis; 7,8-dihydroneopterin triphosphate biosynthesis; 7,8-dihydroneopterin triphosphate from GTP: step 1/1. In Deinococcus radiodurans (strain ATCC 13939 / DSM 20539 / JCM 16871 / CCUG 27074 / LMG 4051 / NBRC 15346 / NCIMB 9279 / VKM B-1422 / R1), this protein is GTP cyclohydrolase 1 (folE).